The primary structure comprises 84 residues: Small ribosomal subunit protein uS17 (84 aa).

The protein belongs to the universal ribosomal protein uS17 family. As to quaternary structure, part of the 30S ribosomal subunit.

Its function is as follows. One of the primary rRNA binding proteins, it binds specifically to the 5'-end of 16S ribosomal RNA. This Citrobacter koseri (strain ATCC BAA-895 / CDC 4225-83 / SGSC4696) protein is Small ribosomal subunit protein uS17.